Consider the following 361-residue polypeptide: 5-exo-hydroxycamphor dehydrogenase (361 aa).

Zn(2+)-binding residues include Cys-40, His-62, Cys-98, Cys-101, Cys-104, and Cys-170.

The protein belongs to the zinc-containing alcohol dehydrogenase family. The cofactor is Zn(2+).

It catalyses the reaction (1R,4R,5R)-5-hydroxycamphor + NAD(+) = (1R,4R)-bornane-2,5-dione + NADH + H(+). The protein operates within terpene metabolism; (R)-camphor degradation. This Pseudomonas putida (Arthrobacter siderocapsulatus) protein is 5-exo-hydroxycamphor dehydrogenase (camD).